A 152-amino-acid polypeptide reads, in one-letter code: Nucleoside diphosphate kinase (152 aa).

The ATP site is built by Lys-11, Phe-59, Arg-87, Thr-93, Arg-104, and Asn-114. Residue His-117 is the Pros-phosphohistidine intermediate of the active site.

The protein belongs to the NDK family. Homotetramer. The cofactor is Mg(2+).

The protein localises to the cytoplasm. It carries out the reaction a 2'-deoxyribonucleoside 5'-diphosphate + ATP = a 2'-deoxyribonucleoside 5'-triphosphate + ADP. It catalyses the reaction a ribonucleoside 5'-diphosphate + ATP = a ribonucleoside 5'-triphosphate + ADP. In terms of biological role, major role in the synthesis of nucleoside triphosphates other than ATP. The ATP gamma phosphate is transferred to the NDP beta phosphate via a ping-pong mechanism, using a phosphorylated active-site intermediate. The chain is Nucleoside diphosphate kinase from Prochlorococcus marinus (strain AS9601).